The chain runs to 356 residues: Histidinol-phosphate aminotransferase 2 (356 aa).

The residue at position 217 (Lys-217) is an N6-(pyridoxal phosphate)lysine.

This sequence belongs to the class-II pyridoxal-phosphate-dependent aminotransferase family. Histidinol-phosphate aminotransferase subfamily. In terms of assembly, homodimer. It depends on pyridoxal 5'-phosphate as a cofactor.

The catalysed reaction is L-histidinol phosphate + 2-oxoglutarate = 3-(imidazol-4-yl)-2-oxopropyl phosphate + L-glutamate. The protein operates within amino-acid biosynthesis; L-histidine biosynthesis; L-histidine from 5-phospho-alpha-D-ribose 1-diphosphate: step 7/9. The chain is Histidinol-phosphate aminotransferase 2 from Burkholderia pseudomallei (strain 1710b).